A 118-amino-acid polypeptide reads, in one-letter code: Putative pterin-4-alpha-carbinolamine dehydratase (118 aa).

Belongs to the pterin-4-alpha-carbinolamine dehydratase family.

The enzyme catalyses (4aS,6R)-4a-hydroxy-L-erythro-5,6,7,8-tetrahydrobiopterin = (6R)-L-erythro-6,7-dihydrobiopterin + H2O. The polypeptide is Putative pterin-4-alpha-carbinolamine dehydratase (phhB) (Xanthomonas axonopodis pv. citri (strain 306)).